Reading from the N-terminus, the 308-residue chain is Acyl transferase (308 aa).

Residues Ser116, Asp213, and His243 each act as charge relay system in the active site.

The protein belongs to the LuxD family.

The protein operates within lipid metabolism; fatty acid reduction for biolumincescence. Its function is as follows. Acyl transferase is part of the fatty acid reductase system required for aldehyde biosynthesis; it produces fatty acids for the luminescent reaction. The sequence is that of Acyl transferase from Shewanella hanedai (Alteromonas hanedai).